The following is a 352-amino-acid chain: MSILAEKLSSILKRYDELTALLSSAEVISDIKKLTELSKEQSSIEEISIASKEYLSVLENIKENKELLEDKELSELAKEELKILEIQKSDLETAIKQLLIPKDPNDDKNIYLELRAGTGGNEAGIFVGDLFKAYCRYADLKKWRVEIVSSSENSVGGYKEIIALIKGKGVYSRLKFEAGTHRVQRVPETESQGRIHTSAITVAIMPEVDDVEVSINPSDLKIEVFRAGGHGGQCVNTTDSAVRITHLPTNISVSMQDEKSQHKNKDKALKILKARLYEKQIEEQQLANAKDRKEQVGSGDRSERIRTYNYPQNRLSEHRINLTLYSLEEIMLSGNLDEVINPLIAHAQSQFE.

An N5-methylglutamine modification is found at Gln233. A disordered region spans residues 288 to 309; that stretch reads NAKDRKEQVGSGDRSERIRTYN. Residues 289–306 show a composition bias toward basic and acidic residues; it reads AKDRKEQVGSGDRSERIR.

Belongs to the prokaryotic/mitochondrial release factor family. Methylated by PrmC. Methylation increases the termination efficiency of RF1.

The protein localises to the cytoplasm. Its function is as follows. Peptide chain release factor 1 directs the termination of translation in response to the peptide chain termination codons UAG and UAA. The chain is Peptide chain release factor 1 from Helicobacter pylori (strain HPAG1).